The following is a 566-amino-acid chain: Protein downstream neighbor of Son (566 aa).

The interval 1–110 (MALSVPGYSP…QPEAPVPFLD (110 aa)) is disordered. Phosphoserine occurs at positions 28 and 34. A compositionally biased stretch (gly residues) spans 62–72 (GGRGGGSGGGP). Positions 73 to 82 (AAARRNPFAR) are enriched in low complexity.

This sequence belongs to the DONSON family. Component of the replisome complex composed of at least DONSON, MCM2, MCM7, PCNA and TICRR; interaction at least with PCNA occurs during DNA replication. In terms of tissue distribution, expressed in the brain, with higher levels in prenatal compared to adult brain.

The protein localises to the nucleus. Its function is as follows. Replisome component that maintains genome stability by protecting stalled or damaged replication forks. After the induction of replication stress, required for the stabilization of stalled replication forks, the efficient activation of the intra-S-phase and G/2M cell-cycle checkpoints and the maintenance of genome stability. In Homo sapiens (Human), this protein is Protein downstream neighbor of Son (DONSON).